The sequence spans 109 residues: N-alpha-acetyltransferase 38, NatC auxiliary subunit (109 aa).

The Sm domain occupies 23–101 (LARCKLENLL…VVSIEVETES (79 aa)).

This sequence belongs to the snRNP Sm proteins family. In terms of assembly, component of the N-terminal acetyltransferase C (NatC) complex.

It is found in the cytoplasm. It localises to the nucleus. Functionally, auxillary component of the N-terminal acetyltransferase C (NatC) complex which catalyzes acetylation of N-terminal methionine residues. N-terminal acetylation protects proteins from ubiquitination and degradation by the N-end rule pathway. This Danio rerio (Zebrafish) protein is N-alpha-acetyltransferase 38, NatC auxiliary subunit (naa38).